Consider the following 325-residue polypeptide: Phosphate acyltransferase (325 aa).

The protein belongs to the PlsX family. In terms of assembly, homodimer. Probably interacts with PlsY.

It is found in the cytoplasm. It catalyses the reaction a fatty acyl-[ACP] + phosphate = an acyl phosphate + holo-[ACP]. The protein operates within lipid metabolism; phospholipid metabolism. Catalyzes the reversible formation of acyl-phosphate (acyl-PO(4)) from acyl-[acyl-carrier-protein] (acyl-ACP). This enzyme utilizes acyl-ACP as fatty acyl donor, but not acyl-CoA. This chain is Phosphate acyltransferase, found in Staphylococcus epidermidis (strain ATCC 12228 / FDA PCI 1200).